A 580-amino-acid chain; its full sequence is Fumarate hydratase class I, aerobic (580 aa).

[4Fe-4S] cluster is bound by residues cysteine 105, cysteine 224, and cysteine 318.

It belongs to the class-I fumarase family. Homodimer. [4Fe-4S] cluster serves as cofactor.

It catalyses the reaction (S)-malate = fumarate + H2O. The catalysed reaction is oxaloacetate = enol-oxaloacetate. Its pathway is carbohydrate metabolism; tricarboxylic acid cycle; (S)-malate from fumarate: step 1/1. In terms of biological role, catalyzes the reversible hydration of fumarate to (S)-malate. Functions as an aerobic enzyme in the direction of malate formation as part of the citric acid cycle. Accounts for about 80% of the fumarase activity when the bacteria grow aerobically. To a lesser extent, also displays D-tartrate dehydratase activity in vitro, but is not able to convert (R)-malate, L-tartrate or meso-tartrate. Can also catalyze the isomerization of enol- to keto-oxaloacetate. The polypeptide is Fumarate hydratase class I, aerobic (Salmonella typhimurium (strain LT2 / SGSC1412 / ATCC 700720)).